Consider the following 360-residue polypeptide: Ubiquitin carboxyl-terminal hydrolase MIY1 (360 aa).

Residue cysteine 28 is the Nucleophile of the active site. Histidine 216 serves as the catalytic Proton acceptor. The interval 317 to 360 is disordered; the sequence is KRKIHSHKKNSEIHAPVKKDKFKRRSSLLNAKASEKEKSECVVM. Composition is skewed to basic and acidic residues over residues 325 to 335 and 349 to 360; these read KNSEIHAPVKK and ASEKEKSECVVM.

This sequence belongs to the MINDY deubiquitinase family. FAM63 subfamily.

It is found in the cytoplasm. The catalysed reaction is Thiol-dependent hydrolysis of ester, thioester, amide, peptide and isopeptide bonds formed by the C-terminal Gly of ubiquitin (a 76-residue protein attached to proteins as an intracellular targeting signal).. In terms of biological role, hydrolase that can specifically remove 'Lys-48'-linked conjugated ubiquitin from proteins. Has endodeubiquitinase activity. The polypeptide is Ubiquitin carboxyl-terminal hydrolase MIY1 (Saccharomyces cerevisiae (strain ATCC 204508 / S288c) (Baker's yeast)).